Here is a 144-residue protein sequence, read N- to C-terminus: uncharacterized protein (144 aa).

Residues 48–119 are a coiled coil; it reads ELNKLKAKAD…KETEEPKMEL (72 aa).

This is an uncharacterized protein from Archaeoglobus fulgidus (strain ATCC 49558 / DSM 4304 / JCM 9628 / NBRC 100126 / VC-16).